The following is a 115-amino-acid chain: DNA repair protein homolog YozK (115 aa).

The UmuC domain occupies Ile-12–Asp-115. Residues Asp-16 and Asp-115 each contribute to the Mg(2+) site.

It belongs to the DNA polymerase type-Y family. The cofactor is Mg(2+).

This is DNA repair protein homolog YozK (yozK) from Bacillus subtilis (strain 168).